The sequence spans 349 residues: Phenylalanine--tRNA ligase alpha subunit (349 aa).

E262 contacts Mg(2+).

It belongs to the class-II aminoacyl-tRNA synthetase family. Phe-tRNA synthetase alpha subunit type 1 subfamily. In terms of assembly, tetramer of two alpha and two beta subunits. Requires Mg(2+) as cofactor.

It is found in the cytoplasm. The catalysed reaction is tRNA(Phe) + L-phenylalanine + ATP = L-phenylalanyl-tRNA(Phe) + AMP + diphosphate + H(+). This chain is Phenylalanine--tRNA ligase alpha subunit, found in Sorangium cellulosum (strain So ce56) (Polyangium cellulosum (strain So ce56)).